The chain runs to 273 residues: Ethanolamine ammonia-lyase small subunit (273 aa).

Adenosylcob(III)alamin contacts are provided by Val164, Glu185, and Cys214.

The protein belongs to the EutC family. The basic unit is a heterodimer which dimerizes to form tetramers. The heterotetramers trimerize; 6 large subunits form a core ring with 6 small subunits projecting outwards. Adenosylcob(III)alamin is required as a cofactor.

Its subcellular location is the bacterial microcompartment. The catalysed reaction is ethanolamine = acetaldehyde + NH4(+). The protein operates within amine and polyamine degradation; ethanolamine degradation. Its function is as follows. Catalyzes the deamination of various vicinal amino-alcohols to oxo compounds. Allows this organism to utilize ethanolamine as the sole source of nitrogen and carbon in the presence of external vitamin B12. The chain is Ethanolamine ammonia-lyase small subunit from Pseudomonas aeruginosa (strain LESB58).